The sequence spans 83 residues: Small ribosomal subunit protein bS20 (83 aa).

Belongs to the bacterial ribosomal protein bS20 family.

Its function is as follows. Binds directly to 16S ribosomal RNA. The sequence is that of Small ribosomal subunit protein bS20 from Flavobacterium johnsoniae (strain ATCC 17061 / DSM 2064 / JCM 8514 / BCRC 14874 / CCUG 350202 / NBRC 14942 / NCIMB 11054 / UW101) (Cytophaga johnsonae).